Reading from the N-terminus, the 294-residue chain is Glyceraldehyde-3-phosphate dehydrogenase (294 aa).

3 residues coordinate NAD(+): aspartate 19, lysine 63, and threonine 105. D-glyceraldehyde 3-phosphate is bound by residues 134-136 (SCT) and threonine 165. Cysteine 135 acts as the Nucleophile in catalysis. The interval 169–188 (KTVDGPSHKDWRGGRGASQN) is disordered. Residues 194 to 195 (TG) and arginine 217 contribute to the D-glyceraldehyde 3-phosphate site.

Belongs to the glyceraldehyde-3-phosphate dehydrogenase family. In terms of assembly, homotetramer.

The protein resides in the cytoplasm. The catalysed reaction is D-glyceraldehyde 3-phosphate + phosphate + NAD(+) = (2R)-3-phospho-glyceroyl phosphate + NADH + H(+). It functions in the pathway carbohydrate degradation; glycolysis; pyruvate from D-glyceraldehyde 3-phosphate: step 1/5. Its function is as follows. Catalyzes the oxidative phosphorylation of glyceraldehyde 3-phosphate (G3P) to 1,3-bisphosphoglycerate (BPG) using the cofactor NAD. The first reaction step involves the formation of a hemiacetal intermediate between G3P and a cysteine residue, and this hemiacetal intermediate is then oxidized to a thioester, with concomitant reduction of NAD to NADH. The reduced NADH is then exchanged with the second NAD, and the thioester is attacked by a nucleophilic inorganic phosphate to produce BPG. This Serratia marcescens protein is Glyceraldehyde-3-phosphate dehydrogenase (gap).